The chain runs to 163 residues: Ribonuclease H (163 aa).

The 142-residue stretch at 16–157 (TTSPVEIYCD…CDSLARQAIT (142 aa)) folds into the RNase H type-1 domain. Positions 25, 63, 85, and 149 each coordinate Mg(2+).

The protein belongs to the RNase H family. Monomer. Mg(2+) is required as a cofactor.

It is found in the cytoplasm. The catalysed reaction is Endonucleolytic cleavage to 5'-phosphomonoester.. Functionally, endonuclease that specifically degrades the RNA of RNA-DNA hybrids. The protein is Ribonuclease H of Pelobacter propionicus (strain DSM 2379 / NBRC 103807 / OttBd1).